The chain runs to 214 residues: Probable GTP-binding protein EngB (214 aa).

The EngB-type G domain maps to 24 to 199 (GGYEVAFAGR…RGIVGGWLGL (176 aa)). Residues 32–39 (GRSNAGKS), 59–63 (GRTQQ), 77–80 (DLPG), 144–147 (TKAD), and 178–180 (YSG) contribute to the GTP site. Positions 39 and 61 each coordinate Mg(2+).

The protein belongs to the TRAFAC class TrmE-Era-EngA-EngB-Septin-like GTPase superfamily. EngB GTPase family. Mg(2+) is required as a cofactor.

Functionally, necessary for normal cell division and for the maintenance of normal septation. The chain is Probable GTP-binding protein EngB from Xanthomonas axonopodis pv. citri (strain 306).